We begin with the raw amino-acid sequence, 350 residues long: tRNA N6-adenosine threonylcarbamoyltransferase (350 aa).

2 residues coordinate Fe cation: His-115 and His-119. Substrate is bound by residues 137–141 (IISGG), Asp-170, Gly-183, and Asn-281. Fe cation is bound at residue Asp-309.

This sequence belongs to the KAE1 / TsaD family. Fe(2+) serves as cofactor.

It localises to the cytoplasm. It catalyses the reaction L-threonylcarbamoyladenylate + adenosine(37) in tRNA = N(6)-L-threonylcarbamoyladenosine(37) in tRNA + AMP + H(+). Its function is as follows. Required for the formation of a threonylcarbamoyl group on adenosine at position 37 (t(6)A37) in tRNAs that read codons beginning with adenine. Is involved in the transfer of the threonylcarbamoyl moiety of threonylcarbamoyl-AMP (TC-AMP) to the N6 group of A37, together with TsaE and TsaB. TsaD likely plays a direct catalytic role in this reaction. This Ehrlichia canis (strain Jake) protein is tRNA N6-adenosine threonylcarbamoyltransferase.